A 175-amino-acid polypeptide reads, in one-letter code: Shikimate kinase (175 aa).

Residue 11-16 (GAGKTT) coordinates ATP. Residue Thr15 coordinates Mg(2+). Residues Asp33, Arg57, and Gly79 each coordinate substrate. Position 118 (Arg118) interacts with ATP. Arg140 is a binding site for substrate.

The protein belongs to the shikimate kinase family. Monomer. Mg(2+) serves as cofactor.

The protein localises to the cytoplasm. It catalyses the reaction shikimate + ATP = 3-phosphoshikimate + ADP + H(+). The protein operates within metabolic intermediate biosynthesis; chorismate biosynthesis; chorismate from D-erythrose 4-phosphate and phosphoenolpyruvate: step 5/7. Functionally, catalyzes the specific phosphorylation of the 3-hydroxyl group of shikimic acid using ATP as a cosubstrate. The protein is Shikimate kinase of Bacteroides thetaiotaomicron (strain ATCC 29148 / DSM 2079 / JCM 5827 / CCUG 10774 / NCTC 10582 / VPI-5482 / E50).